The primary structure comprises 370 residues: Anhydro-N-acetylmuramic acid kinase (370 aa).

13–20 (GTSLDGVD) is an ATP binding site.

It belongs to the anhydro-N-acetylmuramic acid kinase family.

The enzyme catalyses 1,6-anhydro-N-acetyl-beta-muramate + ATP + H2O = N-acetyl-D-muramate 6-phosphate + ADP + H(+). It participates in amino-sugar metabolism; 1,6-anhydro-N-acetylmuramate degradation. It functions in the pathway cell wall biogenesis; peptidoglycan recycling. In terms of biological role, catalyzes the specific phosphorylation of 1,6-anhydro-N-acetylmuramic acid (anhMurNAc) with the simultaneous cleavage of the 1,6-anhydro ring, generating MurNAc-6-P. Is required for the utilization of anhMurNAc either imported from the medium or derived from its own cell wall murein, and thus plays a role in cell wall recycling. This chain is Anhydro-N-acetylmuramic acid kinase, found in Vibrio cholerae serotype O1 (strain ATCC 39315 / El Tor Inaba N16961).